A 204-amino-acid chain; its full sequence is MTINYPVGTHHGKTLKNNTLRTGKTTKKVLFGKRGMGLEDEINLANDYYLANRLAVVHKKPTPITIVKVDYPARSAAKITEAYFKQASTTDYNGVYQGKYIDFDAKETKNKTSFPLKNFHEHQISHLASILSQGGIGFVIIKFTSLNENYVYPASELIQQWQHLNGKQSISYQEIVDKSFVVPESLNPSLDYLTAVDKMLEALH.

Threonine 89, aspartate 91, aspartate 104, and glutamine 123 together coordinate Mg(2+).

It belongs to the RecU family. It depends on Mg(2+) as a cofactor.

It is found in the cytoplasm. The catalysed reaction is Endonucleolytic cleavage at a junction such as a reciprocal single-stranded crossover between two homologous DNA duplexes (Holliday junction).. Endonuclease that resolves Holliday junction intermediates in genetic recombination. Cleaves mobile four-strand junctions by introducing symmetrical nicks in paired strands. Promotes annealing of linear ssDNA with homologous dsDNA. Required for DNA repair, homologous recombination and chromosome segregation. The polypeptide is Holliday junction resolvase RecU (Leuconostoc mesenteroides subsp. mesenteroides (strain ATCC 8293 / DSM 20343 / BCRC 11652 / CCM 1803 / JCM 6124 / NCDO 523 / NBRC 100496 / NCIMB 8023 / NCTC 12954 / NRRL B-1118 / 37Y)).